A 30-amino-acid polypeptide reads, in one-letter code: Snaclec carinactivase-1 regulatory subunit 14 kDa chain (30 aa).

One can recognise a C-type lectin domain in the interval 1–30 (DCLPDWFHYEGHCYRVFDEPKKWADAEKFC). Cysteine 2 and cysteine 13 are disulfide-bonded.

This sequence belongs to the snaclec family. In terms of assembly, heterodimer of a metalloproteinase subunit and a regulatory subunit comprising two polypeptides disulfide-linked (14 kDa and 17 kDa chains). As to expression, expressed by the venom gland.

It is found in the secreted. Functionally, calcium-dependent prothrombin activator. This protein may activate prothrombin via recognition by the regulatory subunit of the calcium ion bound conformation of its gamma-carboxyglutamic acid (GLA) domain, and the subsequent conversion of prothrombin to active thrombin is catalyzed by the catalytic subunit. The polypeptide is Snaclec carinactivase-1 regulatory subunit 14 kDa chain (Echis carinatus (Saw-scaled viper)).